The following is a 579-amino-acid chain: DELLA protein RGA2 (579 aa).

Residues 1 to 31 (MKRDLHQFQGPPDTRFPNHGTANTGSSSKDK) are disordered. The DELLA motif signature appears at 45–49 (DELLA). Composition is skewed to low complexity over residues 149 to 162 (SSSSSNQAGDNSQS) and 174 to 183 (SLVTGTTVTT). The tract at residues 149–183 (SSSSSNQAGDNSQSTKRLKSCSSPDSLVTGTTVTT) is disordered. Positions 205 to 574 (VDSQENGVRL…RPLITTSAWK (370 aa)) constitute a GRAS domain. The interval 212-266 (VRLVHALMACAEAIQNNDLSIAEALVKQIGFLAVSQAGAMRKVATYFAEALARRI) is leucine repeat I (LRI). The segment at 285-350 (QMHFYETCPY…GGPPVFRLTG (66 aa)) is VHIID. Positions 316-320 (VHVID) match the VHIID motif. Positions 364-396 (EVGCKLAQLAEAIHVEFEYRGFVANSLADLDAS) are leucine repeat II (LRII). The interval 408 to 495 (VAVNSVFELH…EVYLGKQICN (88 aa)) is PFYRE. The LXXLL motif motif lies at 416 to 420 (LHKLL). Positions 498 to 574 (ACEGPDRVER…RPLITTSAWK (77 aa)) are SAW.

Belongs to the GRAS family. DELLA subfamily. In terms of processing, phosphorylated. Ubiquitinated. Upon GA application it is ubiquitinated, leading to its subsequent degradation.

It localises to the nucleus. Functionally, probable transcriptional regulator that acts as a repressor of the gibberellin (GA) signaling pathway. Probably acts by participating in large multiprotein complexes that represses transcription of GA-inducible genes. Upon GA application, it is degraded by the proteasome, allowing the GA signaling pathway. The chain is DELLA protein RGA2 (RGA2) from Brassica campestris (Field mustard).